The chain runs to 210 residues: Protein-methionine-sulfoxide reductase heme-binding subunit MsrQ (210 aa).

The next 4 membrane-spanning stretches (helical) occupy residues 15–35, 89–109, 122–142, and 160–180; these read DTLV…WLAW, LFAF…DLFF, PFIT…VTST, and LVYL…KADH.

This sequence belongs to the MsrQ family. Heterodimer of a catalytic subunit (MsrP) and a heme-binding subunit (MsrQ). FMN serves as cofactor. Heme b is required as a cofactor.

The protein resides in the cell inner membrane. Functionally, part of the MsrPQ system that repairs oxidized periplasmic proteins containing methionine sulfoxide residues (Met-O), using respiratory chain electrons. Thus protects these proteins from oxidative-stress damage caused by reactive species of oxygen and chlorine generated by the host defense mechanisms. MsrPQ is essential for the maintenance of envelope integrity under bleach stress, rescuing a wide series of structurally unrelated periplasmic proteins from methionine oxidation. MsrQ provides electrons for reduction to the reductase catalytic subunit MsrP, using the quinone pool of the respiratory chain. The sequence is that of Protein-methionine-sulfoxide reductase heme-binding subunit MsrQ from Caulobacter vibrioides (strain ATCC 19089 / CIP 103742 / CB 15) (Caulobacter crescentus).